A 161-amino-acid polypeptide reads, in one-letter code: Cytochrome c-type biogenesis protein CcmE (161 aa).

At 1-8 (MNPVRKKR) the chain is on the cytoplasmic side. Residues 9-29 (LYIVLAILCGVSIAVALALTA) form a helical; Signal-anchor for type II membrane protein membrane-spanning segment. At 30-161 (LQENINLFYT…AKGYQQESAQ (132 aa)) the chain is on the periplasmic side. Residues histidine 124 and tyrosine 128 each coordinate heme.

The protein belongs to the CcmE/CycJ family.

It is found in the cell inner membrane. Functionally, heme chaperone required for the biogenesis of c-type cytochromes. Transiently binds heme delivered by CcmC and transfers the heme to apo-cytochromes in a process facilitated by CcmF and CcmH. This chain is Cytochrome c-type biogenesis protein CcmE, found in Ectopseudomonas mendocina (strain ymp) (Pseudomonas mendocina).